Consider the following 492-residue polypeptide: GTPase Der (492 aa).

EngA-type G domains follow at residues 3 to 167 (FTLA…DAYA) and 201 to 381 (LQVA…EVWN). Residues 9–16 (GRPNVGKS), 56–60 (DTAGL), 119–122 (NKAE), 207–214 (GRPNAGKS), 259–263 (DTAGM), and 324–327 (NKWD) each bind GTP. The KH-like domain occupies 382-468 (RRVTTAQLNR…RLWMRGQNDA (87 aa)). Residues 462–492 (MRGQNDANPYKGRKKAPPSKLRKHTDGRRKD) form a disordered region. Basic residues predominate over residues 472-492 (KGRKKAPPSKLRKHTDGRRKD).

Belongs to the TRAFAC class TrmE-Era-EngA-EngB-Septin-like GTPase superfamily. EngA (Der) GTPase family. In terms of assembly, associates with the 50S ribosomal subunit.

Its function is as follows. GTPase that plays an essential role in the late steps of ribosome biogenesis. The protein is GTPase Der of Roseobacter denitrificans (strain ATCC 33942 / OCh 114) (Erythrobacter sp. (strain OCh 114)).